The sequence spans 198 residues: ATP-dependent Clp protease proteolytic subunit (198 aa).

The Nucleophile role is filled by Ser-98. The active site involves His-123.

Belongs to the peptidase S14 family. As to quaternary structure, fourteen ClpP subunits assemble into 2 heptameric rings which stack back to back to give a disk-like structure with a central cavity, resembling the structure of eukaryotic proteasomes.

Its subcellular location is the cytoplasm. It catalyses the reaction Hydrolysis of proteins to small peptides in the presence of ATP and magnesium. alpha-casein is the usual test substrate. In the absence of ATP, only oligopeptides shorter than five residues are hydrolyzed (such as succinyl-Leu-Tyr-|-NHMec, and Leu-Tyr-Leu-|-Tyr-Trp, in which cleavage of the -Tyr-|-Leu- and -Tyr-|-Trp bonds also occurs).. In terms of biological role, cleaves peptides in various proteins in a process that requires ATP hydrolysis. Has a chymotrypsin-like activity. Plays a major role in the degradation of misfolded proteins. This is ATP-dependent Clp protease proteolytic subunit from Halothermothrix orenii (strain H 168 / OCM 544 / DSM 9562).